Consider the following 183-residue polypeptide: Ribosome maturation factor RimP (183 aa).

This sequence belongs to the RimP family.

It localises to the cytoplasm. In terms of biological role, required for maturation of 30S ribosomal subunits. The sequence is that of Ribosome maturation factor RimP from Mycobacterium bovis (strain ATCC BAA-935 / AF2122/97).